A 143-amino-acid polypeptide reads, in one-letter code: Transcriptional regulator MraZ (143 aa).

2 consecutive SpoVT-AbrB domains span residues 5–47 and 76–119; these read TYTP…SARE and ASDE…DSES.

This sequence belongs to the MraZ family. Forms oligomers.

Its subcellular location is the cytoplasm. The protein localises to the nucleoid. The chain is Transcriptional regulator MraZ from Micrococcus luteus (strain ATCC 4698 / DSM 20030 / JCM 1464 / CCM 169 / CCUG 5858 / IAM 1056 / NBRC 3333 / NCIMB 9278 / NCTC 2665 / VKM Ac-2230) (Micrococcus lysodeikticus).